The chain runs to 191 residues: Pyridoxal 5'-phosphate synthase subunit PdxT (191 aa).

Residue 46–48 coordinates L-glutamine; the sequence is GES. Cys78 serves as the catalytic Nucleophile. L-glutamine is bound by residues Arg105 and 133–134; that span reads IR. Active-site charge relay system residues include His169 and Glu171.

This sequence belongs to the glutaminase PdxT/SNO family. In the presence of PdxS, forms a dodecamer of heterodimers. Only shows activity in the heterodimer.

The enzyme catalyses aldehydo-D-ribose 5-phosphate + D-glyceraldehyde 3-phosphate + L-glutamine = pyridoxal 5'-phosphate + L-glutamate + phosphate + 3 H2O + H(+). It catalyses the reaction L-glutamine + H2O = L-glutamate + NH4(+). It functions in the pathway cofactor biosynthesis; pyridoxal 5'-phosphate biosynthesis. Its function is as follows. Catalyzes the hydrolysis of glutamine to glutamate and ammonia as part of the biosynthesis of pyridoxal 5'-phosphate. The resulting ammonia molecule is channeled to the active site of PdxS. This chain is Pyridoxal 5'-phosphate synthase subunit PdxT, found in Brevibacillus brevis (strain 47 / JCM 6285 / NBRC 100599).